We begin with the raw amino-acid sequence, 225 residues long: UPF0758 protein Sputw3181_0338 (225 aa).

Residues 102-224 enclose the MPN domain; sequence VLTNPDLTRD…IVSFAERGWI (123 aa). Residues His173, His175, and Asp186 each coordinate Zn(2+). A JAMM motif motif is present at residues 173-186; the sequence is HNHPSGIAEPSQAD.

This sequence belongs to the UPF0758 family.

This chain is UPF0758 protein Sputw3181_0338, found in Shewanella sp. (strain W3-18-1).